The sequence spans 380 residues: Cytochrome b (380 aa).

4 consecutive transmembrane segments (helical) span residues 33–53 (FGSL…FLAM), 77–98 (WMIR…FLHI), 113–133 (WNIG…GYVL), and 178–198 (FFTL…LHLL). His83 and His97 together coordinate heme b. Heme b contacts are provided by His182 and His196. A ubiquinone is bound at residue His201. The next 4 helical transmembrane spans lie at 226 to 246 (IKDI…TLLS), 288 to 308 (LGGV…PALH), 320 to 340 (LSQF…WIGG), and 347 to 367 (FITI…LLMP).

Belongs to the cytochrome b family. In terms of assembly, the cytochrome bc1 complex contains 11 subunits: 3 respiratory subunits (MT-CYB, CYC1 and UQCRFS1), 2 core proteins (UQCRC1 and UQCRC2) and 6 low-molecular weight proteins (UQCRH/QCR6, UQCRB/QCR7, UQCRQ/QCR8, UQCR10/QCR9, UQCR11/QCR10 and a cleavage product of UQCRFS1). This cytochrome bc1 complex then forms a dimer. It depends on heme b as a cofactor.

The protein resides in the mitochondrion inner membrane. Component of the ubiquinol-cytochrome c reductase complex (complex III or cytochrome b-c1 complex) that is part of the mitochondrial respiratory chain. The b-c1 complex mediates electron transfer from ubiquinol to cytochrome c. Contributes to the generation of a proton gradient across the mitochondrial membrane that is then used for ATP synthesis. The polypeptide is Cytochrome b (MT-CYB) (Pongo pygmaeus (Bornean orangutan)).